The primary structure comprises 239 residues: Purine nucleoside phosphorylase DeoD-type (239 aa).

Histidine 5 lines the a purine D-ribonucleoside pocket. Phosphate-binding positions include glycine 21, arginine 25, arginine 44, and 88–91; that span reads RVGS. A purine D-ribonucleoside contacts are provided by residues 180–182 and 204–205; these read EME and SD. Residue aspartate 205 is the Proton donor of the active site.

This sequence belongs to the PNP/UDP phosphorylase family. In terms of assembly, homohexamer; trimer of homodimers.

It catalyses the reaction a purine D-ribonucleoside + phosphate = a purine nucleobase + alpha-D-ribose 1-phosphate. The catalysed reaction is a purine 2'-deoxy-D-ribonucleoside + phosphate = a purine nucleobase + 2-deoxy-alpha-D-ribose 1-phosphate. Catalyzes the reversible phosphorolytic breakdown of the N-glycosidic bond in the beta-(deoxy)ribonucleoside molecules, with the formation of the corresponding free purine bases and pentose-1-phosphate. The protein is Purine nucleoside phosphorylase DeoD-type of Salmonella agona (strain SL483).